Consider the following 554-residue polypeptide: 4-coumarate--CoA ligase 3 (554 aa).

Positions 188, 189, 190, 191, 192, and 196 each coordinate ATP. Residues tyrosine 238 and serine 242 each contribute to the (E)-4-coumaroyl-AMP site. Lysine 259 provides a ligand contact to CoA. Positions 261–330 (DLGALVDLVR…AKIPNAVLGQ (70 aa)) are SBD1. 5 residues coordinate (E)-4-coumaroyl-AMP: alanine 308, glutamine 330, glycine 331, threonine 335, and methionine 343. ATP-binding residues include glutamine 330, glycine 331, and threonine 335. Positions 331–398 (GYGMTEAGPV…IRGEQIMKGY (68 aa)) are SBD2. Residues aspartate 419 and arginine 434 each coordinate ATP. (E)-4-coumaroyl-AMP contacts are provided by lysine 436 and lysine 440. 2 residues coordinate CoA: lysine 442 and glycine 443. ATP is bound at residue lysine 525.

It belongs to the ATP-dependent AMP-binding enzyme family. The cofactor is Mg(2+). As to expression, expressed in root exodermis and epidermis cells, stem vascular cells, leaf developing vascular bundle cells and parenchyma cells, lemma, palea, stamens and pistil.

The enzyme catalyses (E)-ferulate + ATP + CoA = (E)-feruloyl-CoA + AMP + diphosphate. It carries out the reaction (E)-4-coumarate + ATP + CoA = (E)-4-coumaroyl-CoA + AMP + diphosphate. It catalyses the reaction (E)-caffeate + ATP + CoA = (E)-caffeoyl-CoA + AMP + diphosphate. The catalysed reaction is (E)-cinnamate + ATP + CoA = (E)-cinnamoyl-CoA + AMP + diphosphate. The enzyme catalyses (E)-ferulate + ATP + H(+) = (E)-feruloyl-AMP + diphosphate. It carries out the reaction (E)-feruloyl-AMP + CoA = (E)-feruloyl-CoA + AMP + H(+). It catalyses the reaction (E)-4-coumarate + ATP + H(+) = (E)-4-coumaroyl-AMP + diphosphate. The catalysed reaction is (E)-4-coumaroyl-AMP + CoA = (E)-4-coumaroyl-CoA + AMP + H(+). The enzyme catalyses (E)-caffeate + ATP + H(+) = (E)-caffeoyl-AMP + diphosphate. It carries out the reaction (E)-caffeoyl-AMP + CoA = (E)-caffeoyl-CoA + AMP + H(+). It participates in phytoalexin biosynthesis; 3,4',5-trihydroxystilbene biosynthesis; 3,4',5-trihydroxystilbene from trans-4-coumarate: step 1/2. Its function is as follows. Involved in the phenylpropanoid metabolism by mediating the activation of a number of hydroxycinnamates for the biosynthesis of monolignols and other phenolic secondary metabolites. Catalyzes the formation of CoA esters of cinnamate, 4-coumarate, caffeate and ferulate. Is more efficient with substrates in the following order: ferulate &gt; 4-coumarate &gt; caffeate &gt; cinnamate. Possesses very high activity compared to 4CL1, 4CL2, 4CL4 and 4CL5. Cannot convert sinapate to its corresponding CoA ester. May play a role in the synthesis of lignin as well as other phenolic compounds. Follows a two-step reaction mechanism, wherein the carboxylate substrate first undergoes adenylation by ATP, followed by a thioesterification in the presence of CoA to yield the final CoA thioester. The protein is 4-coumarate--CoA ligase 3 of Oryza sativa subsp. japonica (Rice).